We begin with the raw amino-acid sequence, 206 residues long: Large ribosomal subunit protein uL13x (206 aa).

Belongs to the universal ribosomal protein uL13 family.

This Arabidopsis thaliana (Mouse-ear cress) protein is Large ribosomal subunit protein uL13x (RPL13AC).